The following is a 1396-amino-acid chain: Melanoma inhibitory activity protein 2 (1396 aa).

The first 22 residues, Met-1–Gly-22, serve as a signal peptide directing secretion. Over Thr-23–Pro-604 the chain is Lumenal. An SH3 domain is found at Thr-39–Val-101. Asn-59 carries N-linked (GlcNAc...) asparagine glycosylation. Disordered regions lie at residues Glu-197–Glu-288 and Glu-331–Glu-361. Acidic residues predominate over residues Ser-243–Asp-258. Asn-366 carries N-linked (GlcNAc...) asparagine glycosylation. Disordered regions lie at residues Asp-396–Glu-421 and Pro-525–Val-557. The stretch at Ile-605–Asn-625 is an intramembrane region. Residues Pro-626–Gly-628 are Lumenal-facing. The chain crosses the membrane as a helical span at residues Phe-629–Leu-649. Over Trp-650 to Ala-1396 the chain is Cytoplasmic. Residues Arg-651–Lys-1243 are mediates interaction with MIA3. Coiled-coil stretches lie at residues Tyr-693–Ser-867 and Ala-914–Lys-1082. The tract at residues Pro-1103–Ala-1396 is disordered. Positions Thr-1105 to Ala-1396 are proline-rich domain (PRD); probably mediates interaction with COPII coat subunits. Positions Leu-1135–Leu-1146 are enriched in low complexity. Residues Met-1165 to Asp-1179 are compositionally biased toward basic and acidic residues. The segment covering Met-1252–Pro-1269 has biased composition (polar residues). 2 stretches are compositionally biased toward pro residues: residues Arg-1331 to Pro-1342 and Gly-1351 to His-1368.

It belongs to the MIA/OTOR family. As to quaternary structure, interacts with MIA3. Interacts with the COPII coat subunits SEC23A, SEC23B and maybe SEC24C. Interacts with PREB; recruits PREB to endoplasmic reticulum exit sites. Interacts with APOB. Isoform 1 is expressed in liver (at protein level). Isoform 2 is highly expressed in liver and weakly in testis.

The protein localises to the endoplasmic reticulum membrane. Its function is as follows. Plays a role in the transport of cargos that are too large to fit into COPII-coated vesicles and require specific mechanisms to be incorporated into membrane-bound carriers and exported from the endoplasmic reticulum. Plays a role in the secretion of lipoproteins, pre-chylomicrons and pre-VLDLs, by participating in their export from the endoplasmic reticulum. Thereby, may play a role in cholesterol and triglyceride homeostasis. Required for collagen VII (COL7A1) secretion by loading COL7A1 into transport carriers and recruiting PREB/SEC12 at the endoplasmic reticulum exit sites. This is Melanoma inhibitory activity protein 2 from Mus musculus (Mouse).